The following is a 456-amino-acid chain: MFS-type transporter SLC18B1 (456 aa).

Residue M1 is modified to N-acetylmethionine. Residues M1 to E24 form a disordered region. Over M1–Q33 the chain is Cytoplasmic. The span at P10 to G23 shows a compositional bias: low complexity. Phosphoserine is present on S21. A helical membrane pass occupies residues V34–L54. Over G55–T70 the chain is Extracellular. The chain crosses the membrane as a helical span at residues I71–G91. The Cytoplasmic segment spans residues N92 to K100. The chain crosses the membrane as a helical span at residues F101–D121. The Extracellular portion of the chain corresponds to R122–P127. Residues V128–M148 traverse the membrane as a helical segment. At T149–N161 the chain is on the cytoplasmic side. Residues N162–V184 traverse the membrane as a helical segment. Over G185–E195 the chain is Extracellular. Residues V196–L216 form a helical membrane-spanning segment. The Cytoplasmic segment spans residues P217–K230. Residues L231–F251 traverse the membrane as a helical segment. Residues G252–Y272 are Extracellular-facing. Residues V273–L293 form a helical membrane-spanning segment. The Cytoplasmic segment spans residues L294–W304. A helical membrane pass occupies residues L305–I325. Over L326–Q331 the chain is Extracellular. The chain crosses the membrane as a helical span at residues L332–P352. The Cytoplasmic portion of the chain corresponds to T353–S377. A helical membrane pass occupies residues G378–L398. Topologically, residues Y399–A407 are extracellular. A helical transmembrane segment spans residues A408–L428. Residues E429–T456 are Cytoplasmic-facing. Position 438 is a phosphoserine (S438).

It belongs to the major facilitator superfamily. In terms of tissue distribution, expressed in various tissues including lung, placenta, adrenal gland, liver, testis, and brain.

The protein localises to the cytoplasmic vesicle. It localises to the secretory vesicle membrane. The protein resides in the secretory vesicle. It is found in the synaptic vesicle membrane. It carries out the reaction spermine(in) + n H(+)(out) = spermine(out) + n H(+)(in). It catalyses the reaction spermidine(in) + n H(+)(out) = spermidine(out) + n H(+)(in). The catalysed reaction is serotonin(in) + n H(+)(out) = serotonin(out) + n H(+)(in). Its function is as follows. Proton-coupled polyamine antiporter involved in the translocation of polyamines from cytosol into secretory vesicles prior to their release via exocytosis. Uses the electrochemical proton gradient generated by a V-type proton-pumping ATPase to couple the efflux of protons with the uptake of a polyamine molecule. Facilitates vesicular storage of spermine and spermidine in astrocytes with an impact on glutamatergic neuronal transmission and memory formation. Upon antigen stimulation, regulates polyamine accumulation and release in mast cell secretory granules, which in turn potentiates mast cell degranulation and histamine secretion. The chain is MFS-type transporter SLC18B1 from Homo sapiens (Human).